The chain runs to 325 residues: MSEAESESRAGREEVWIEKYRPQTLDDVMGHENIVGRLKSYVSRNDLSHMLFSGPAGTGKTTCATAIARELYGDDWREHFLELNASDERGIDVVRDRIKNFARTSFGGVEYRIIFLDEADALTSDAQSALRRTMEQFSNNVRFILSCNYSSQIIDPIQSRCAVFRFSPLADDAVAEEIRTIAAEEDIELTEDGLDALVYAADGDMRKAINGLQAASVSGDTVDESAVYAITSTARPEEIRTMVQSALDGDFTASRATLDRLLTEEGIAGGDIIDQLHRSIWEFDIDDDAAVRVLERIGETDYRITRGANERVQLEAMLASLAQGE.

Gly54–Thr61 is an ATP binding site.

This sequence belongs to the activator 1 small subunits family. RfcS subfamily. In terms of assembly, heteromultimer composed of small subunits (RfcS) and large subunits (RfcL).

In terms of biological role, part of the RFC clamp loader complex which loads the PCNA sliding clamp onto DNA. The chain is Replication factor C small subunit from Haloarcula marismortui (strain ATCC 43049 / DSM 3752 / JCM 8966 / VKM B-1809) (Halobacterium marismortui).